Here is a 680-residue protein sequence, read N- to C-terminus: 1-deoxy-D-xylulose-5-phosphate synthase (680 aa).

A compositionally biased stretch (low complexity) spans 1–17 (MQQSPHSPQSQSLSASA). The interval 1–20 (MQQSPHSPQSQSLSASAVDS) is disordered. Thiamine diphosphate is bound by residues H113 and 154 to 156 (GHS). D185 contributes to the Mg(2+) binding site. Residues 186 to 187 (GA), N214, F323, and E408 contribute to the thiamine diphosphate site. N214 lines the Mg(2+) pocket.

It belongs to the transketolase family. DXPS subfamily. As to quaternary structure, homodimer. It depends on Mg(2+) as a cofactor. Requires thiamine diphosphate as cofactor.

The enzyme catalyses D-glyceraldehyde 3-phosphate + pyruvate + H(+) = 1-deoxy-D-xylulose 5-phosphate + CO2. It functions in the pathway metabolic intermediate biosynthesis; 1-deoxy-D-xylulose 5-phosphate biosynthesis; 1-deoxy-D-xylulose 5-phosphate from D-glyceraldehyde 3-phosphate and pyruvate: step 1/1. Its function is as follows. Catalyzes the acyloin condensation reaction between C atoms 2 and 3 of pyruvate and glyceraldehyde 3-phosphate to yield 1-deoxy-D-xylulose-5-phosphate (DXP). The polypeptide is 1-deoxy-D-xylulose-5-phosphate synthase (Psychrobacter cryohalolentis (strain ATCC BAA-1226 / DSM 17306 / VKM B-2378 / K5)).